We begin with the raw amino-acid sequence, 1414 residues long: DNA-directed RNA polymerase subunit beta' (1414 aa).

Positions 70, 72, 85, and 88 each coordinate Zn(2+). Residues Asp-460, Asp-462, and Asp-464 each coordinate Mg(2+). Cys-814, Cys-888, Cys-895, and Cys-898 together coordinate Zn(2+). Residues 1392-1403 (EQALSEALKSSA) show a composition bias toward low complexity. Residues 1392–1414 (EQALSEALKSSAPQEAKAAQKDE) are disordered.

The protein belongs to the RNA polymerase beta' chain family. The RNAP catalytic core consists of 2 alpha, 1 beta, 1 beta' and 1 omega subunit. When a sigma factor is associated with the core the holoenzyme is formed, which can initiate transcription. Mg(2+) serves as cofactor. It depends on Zn(2+) as a cofactor.

The enzyme catalyses RNA(n) + a ribonucleoside 5'-triphosphate = RNA(n+1) + diphosphate. In terms of biological role, DNA-dependent RNA polymerase catalyzes the transcription of DNA into RNA using the four ribonucleoside triphosphates as substrates. The chain is DNA-directed RNA polymerase subunit beta' from Coxiella burnetii (strain RSA 331 / Henzerling II).